The following is a 180-amino-acid chain: Large ribosomal subunit protein uL6 (180 aa).

It belongs to the universal ribosomal protein uL6 family. In terms of assembly, part of the 50S ribosomal subunit.

This protein binds to the 23S rRNA, and is important in its secondary structure. It is located near the subunit interface in the base of the L7/L12 stalk, and near the tRNA binding site of the peptidyltransferase center. The protein is Large ribosomal subunit protein uL6 of Clostridium botulinum (strain Loch Maree / Type A3).